The following is an 875-amino-acid chain: Phosphoenolpyruvate carboxylase (875 aa).

Residues histidine 137 and lysine 542 contribute to the active site.

It belongs to the PEPCase type 1 family. Mg(2+) is required as a cofactor.

It catalyses the reaction oxaloacetate + phosphate = phosphoenolpyruvate + hydrogencarbonate. Functionally, forms oxaloacetate, a four-carbon dicarboxylic acid source for the tricarboxylic acid cycle. The polypeptide is Phosphoenolpyruvate carboxylase (Pseudomonas putida (strain GB-1)).